Consider the following 381-residue polypeptide: Sulfofructose kinase (381 aa).

ATP-binding positions include glycine 10, 72 to 73 (RY), and 100 to 103 (GNGT). Residue asparagine 101 coordinates Mg(2+). Residue aspartate 131 is the Proton acceptor of the active site.

The protein belongs to the phosphofructokinase type A (PFKA) family. Requires Mg(2+) as cofactor.

It carries out the reaction 6-deoxy-6-sulfo-D-fructose + ATP = 6-deoxy-6-sulfo-D-fructose 1-phosphate + ADP + H(+). Functionally, part of the sulfo-EMP2 pathway, a D-sulfoquinovose degradation pathway that produces sulfolactate (SL). Phosphorylates 6-deoxy-6-sulfo-D-fructose (SF) to 6-deoxy-6-sulfo-D-fructose 1-phosphate (SFP). The protein is Sulfofructose kinase of Alkalicoccus urumqiensis (Bacillus urumqiensis).